We begin with the raw amino-acid sequence, 153 residues long: UPF0127 protein TGAM_1372 (153 aa).

The protein belongs to the UPF0127 family.

The polypeptide is UPF0127 protein TGAM_1372 (Thermococcus gammatolerans (strain DSM 15229 / JCM 11827 / EJ3)).